The following is a 730-amino-acid chain: Hemolytic phospholipase C (730 aa).

Residues 1-38 (MTENWKFRRRTFLKHGAQAATLAGLSGLFPETLRRALA) constitute a signal peptide (tat-type signal).

The protein belongs to the bacterial phospholipase C family. Predicted to be exported by the Tat system. The position of the signal peptide cleavage has not been experimentally proven.

The catalysed reaction is a 1,2-diacyl-sn-glycero-3-phosphocholine + H2O = phosphocholine + a 1,2-diacyl-sn-glycerol + H(+). Its function is as follows. Hydrolyzes sphingomyelin in addition to phosphatidylcholine. The chain is Hemolytic phospholipase C (plcH) from Pseudomonas aeruginosa (strain ATCC 15692 / DSM 22644 / CIP 104116 / JCM 14847 / LMG 12228 / 1C / PRS 101 / PAO1).